A 382-amino-acid chain; its full sequence is Solvent efflux pump periplasmic linker SrpA (382 aa).

An N-terminal signal peptide occupies residues 1-23 (MRQIRSPRALRVIPLTALMLISG). Cys24 carries the N-palmitoyl cysteine lipid modification. Cys24 carries the S-diacylglycerol cysteine lipid modification. Residues 98 to 127 (RTYEAQLRRAEANRTSAQNLARRYETLLKT) are a coiled coil.

This sequence belongs to the membrane fusion protein (MFP) (TC 8.A.1) family.

Its subcellular location is the cell inner membrane. In terms of biological role, the periplasmic linker protein component of an organic solvent efflux pump. Involved in export of a number of low log POW compounds including hexane (log POW 3.5), toluene (log POW 2.5) and dimethylphthalate (log POW 2.3). The solvent resistance phenotype has been postulated to depend on the operon expression level. The chain is Solvent efflux pump periplasmic linker SrpA (srpA) from Pseudomonas putida (Arthrobacter siderocapsulatus).